Consider the following 132-residue polypeptide: Small ribosomal subunit protein uS8 (132 aa).

It belongs to the universal ribosomal protein uS8 family. As to quaternary structure, part of the 30S ribosomal subunit. Contacts proteins S5 and S12.

One of the primary rRNA binding proteins, it binds directly to 16S rRNA central domain where it helps coordinate assembly of the platform of the 30S subunit. This chain is Small ribosomal subunit protein uS8, found in Xanthobacter autotrophicus (strain ATCC BAA-1158 / Py2).